The following is a 2380-amino-acid chain: MSQKWNENKKNKDEKDENDKYVGFKNYEKEGWLLNMQPGSSKDGLDIEKASLELFFIQDDATSFRVWIPYNPYFYIYVKEGHQSEVESYLKSTYEKDIAGIDIMDKEDLDLENHLSGLKRKYLKIRFHNVSTLLSVRNDLFPIIKRNKQKSNTSEAYEDESLNKILNSYYNKGNNNNNNHQNYNNNNNQNNNNFNKELNKDDNNNNNSKLNKQATEYILDIREYDVPYYVRAAIDLNIRVGLWYTVIKNGRLTTVNELTTRVDRPDPKVLAYDIETTKLPLKFPDSSIDSIMMISYMLDKQGYLIVNREIVSEDIKDFEYTPKPEYYGPFTVFNEPDEKSVLERFFSEIKREKPHIFVSYNGDMFDWPFVESRAEYHGLSMFHQIGFRNDNGEYRSKINPHMDAFCWVKRDSYLPHGSHGLKAVTREKLRYDPLELDPELMLKSAQEDPETLANYSVSDAVATYYLYMNYVHPFIFSLCTIIPMNPDDVLRKGSGTLCEALLMTQAFKADVIFPNKHKDDINSMYKGHLLESETYVGGHVECLESGVFRSDIPTNFSLDPASIEKHMGNIDQVLKFALKEGGIPLDTVSNYQEVKEDVLKKFTLLKENPKQQSHPLIYHLDVSAMYPNIILTNKLQPTAVVNDEVCATCVYNKPESQCQRTLDWQWRGDYSPSNQSEYRLILQQLESEKFGDGDERKSFLSLSEEKRNELLRKRLKEYSRKVYRKTHQITQEIRSDTICMRENSFYVDTVRLFRDRRYVFKNHHRDWKIKYDQAMQESGGTNSVAVVAAQGMVVLYESLQLAHKCILNSFYGYVMRKGARWYSMQMAGIVTHTGSNIIKEAREVVEQMGRPLEIDTDGIWCILPSHFPENYTLKSASTGKKVTFSYICEMLNEKVAKSFTNHQYQDYNAETNTYTIRDECSILFECDGPYRCMLIPTSKEKDVKLKKRYAVFNREGRICELKGFEIKRRGELKLIKLFQSEVFKEFLGGDSLEGCYQSVGAVANRWLDILDSHAENYEEKDLIELITESSNMSRKLEEYGTQKSSAISTAKKLAEFLGDDMIKDKGLSCQYIISNKPAGSPITERALPVAIFDADFETRCHYLRRWTKSPSGDLDIRELIDWDYYRQRLSGVIQKIITIPAALQNVTNPVPRVIHPDWILKEIRRNEDGRQQTSITSFFEKTEDNDQDNDNDNDNDNDNDNDNSKPQQTDDIENMFSSRFKDLPAFNPKVTKFKRSKQSSSDVSSLLIKKSKSSIETFTNEQEKQIMETKTPSIDKDFQGWLSISKKKWKIQRLLKKRRQRLGGSLFDSDSFRIGSKLTNRESSSSSFFKSQSDIIKKGYWNIISIEPIYGGEPGIYQMWSLIEDQLIPIKVDIGRVFYLNSIDTDPYEDAQKNTNVIPPRGKQRFNVFSVTMSESQFLEQSKELNTLFTNPMIEGVYETKVPLDIKAIIQCGCVATLSRVSPFFTKIVNSNTRFSLEDIASKPDKQFHYLAEHNFNQLFLYHNSRDGKDGYFVLFNMNTQQCSVIFSNPYMAANKIDARVLNSIKEKLPEITFTMDQKSSMSLAKKEIGSLIMEYQRKGLPTIILLQVPNAIGILEQIPILREFPRVPVPYHDNDSMYSPFNWDVHSLKPLPLRLMDAPKLWVYYANMSRYANIPIGNIPTDNASFMCDILYARSLVEQKHLLWMSDSNFPDLGGSEEDDAKFYEELNNVEINNSDCYNQVCFELDIENLATNTILESIHLAEIEGILGNELGDESNVAMFDDIKNTSNNSNTKNGANQNTTNDTTSSFDKLSITNKFRSAINHQISGCEKEFNILRNLVSKWKLDLVSGSNSKRNEISSRYSNYLLLHFYRWISSTNSKLYDPILYRTLHQLMKKVFIQLIFEFKKLGSKIVYANFNKIIICSQKDSIEDARSYCNYILAVIKKKELFSWINFKQTNYYHNLLWLNNSNYSGILYFNPLINKNQQQQQQQQDNADDDDDDDVSENEEEQQQNKNKKLKKIKNGKIITNWNIAEFLPPQIQTSFIIIISDYIYKLHTERDELNRIQKEQQQRYLLKQKISTTSSSSNNDSTAATTTTTKDTINEPTKPDLRKSSTWNEEEDEDISIPPSSSSSTTTTTSKTKKATSKFDLLIDVNRIFTLLDHFQVNQSSLEFPQLPGGYLKLNNPPLEFIKFVCHVLSIDKSISSRVSRLRMKLMTSMKVREFSDEAKFKDPCVSFTLPDVICSSCHSCRDIDLLRNTNTTSISSRLSSQQKSNNNDSDDSDDDNEENEGDDDNIIRVPELSCIQCKGHYSKNTIESQLVEIIQRRSLSYQLQDLRCSKCNDVKSDNLGDICPQCSGQWECTQSNNLFSKDLIIFKSIAEYHNFEWLGETVDSLSKFI.

Residues 169–196 (YYNKGNNNNNNHQNYNNNNNQNNNNFNK) show a composition bias toward low complexity. 5 disordered regions span residues 169–209 (YYNK…NNSK), 1178–1210 (FFEK…QQTD), 1766–1787 (KNTS…NDTT), 1967–1998 (QQQQ…KNKK), and 2059–2120 (KIST…TTTS). Acidic residues predominate over residues 1183 to 1201 (EDNDQDNDNDNDNDNDNDN). A compositionally biased stretch (low complexity) spans 1767–1776 (NTSNNSNTKN). A compositionally biased stretch (polar residues) spans 1777 to 1787 (GANQNTTNDTT). A compositionally biased stretch (acidic residues) spans 1975–1991 (NADDDDDDDVSENEEEQ). 2 stretches are compositionally biased toward low complexity: residues 2059-2081 (KIST…TTKD) and 2110-2120 (SSSSSTTTTTS). Zn(2+) is bound by residues cysteine 2225 and cysteine 2228. The CysA-type zinc-finger motif lies at 2225–2288 (CSSCHSCRDI…RVPELSCIQC (64 aa)). The span at 2245–2258 (ISSRLSSQQKSNNN) shows a compositional bias: low complexity. The tract at residues 2245 to 2275 (ISSRLSSQQKSNNNDSDDSDDDNEENEGDDD) is disordered. Over residues 2259-2275 (DSDDSDDDNEENEGDDD) the composition is skewed to acidic residues. Zn(2+)-binding residues include cysteine 2285 and cysteine 2288. [4Fe-4S] cluster contacts are provided by cysteine 2319, cysteine 2322, cysteine 2334, and cysteine 2337. Residues 2319–2337 (CSKCNDVKSDNLGDICPQC) carry the CysB motif motif.

Belongs to the DNA polymerase type-B family. As to quaternary structure, consists of three subunits: pole, pole2 and pole3. Requires [4Fe-4S] cluster as cofactor.

The protein resides in the nucleus. The enzyme catalyses DNA(n) + a 2'-deoxyribonucleoside 5'-triphosphate = DNA(n+1) + diphosphate. DNA polymerase II participates in chromosomal DNA replication. This Dictyostelium discoideum (Social amoeba) protein is DNA polymerase epsilon catalytic subunit A (pole).